We begin with the raw amino-acid sequence, 572 residues long: Sulfate adenylyltransferase (572 aa).

The interval 1–169 (MANTPHGGVL…IQAINKLNHY (169 aa)) is N-terminal. The segment at 170–394 (DYVGLRYTPA…LRESHPPRAK (225 aa)) is catalytic. Residue Gln-197 participates in sulfate binding. ATP is bound by residues 197-200 (QTRN) and 291-294 (GRDH). Catalysis depends on residues Thr-198, Arg-199, and Asn-200. A sulfate-binding site is contributed by Arg-199. Residue Ala-295 participates in sulfate binding. Met-333 is a binding site for ATP. The interval 395–572 (QGFTIFLTGH…LLESQGFFGN (178 aa)) is allosteric regulation domain; adenylyl-sulfate kinase-like. 3'-phosphoadenylyl sulfate-binding positions include 434-437 (ETVR), Arg-451, 477-478 (IA), and Lys-515.

It in the N-terminal section; belongs to the sulfate adenylyltransferase family. In the C-terminal section; belongs to the APS kinase family. As to quaternary structure, homohexamer. Dimer of trimers.

Its subcellular location is the cytoplasm. The enzyme catalyses sulfate + ATP + H(+) = adenosine 5'-phosphosulfate + diphosphate. Its pathway is sulfur metabolism; hydrogen sulfide biosynthesis; sulfite from sulfate: step 1/3. Allosterically inhibited by 3'-phosphoadenosine 5'-phosphosulfate (PAPS). Its function is as follows. Catalyzes the first intracellular reaction of sulfate assimilation, forming adenosine-5'-phosphosulfate (APS) from inorganic sulfate and ATP. Plays an important role in sulfate activation as a component of the biosynthesis pathway of sulfur-containing amino acids. The protein is Sulfate adenylyltransferase of Yarrowia lipolytica (strain CLIB 122 / E 150) (Yeast).